An 83-amino-acid polypeptide reads, in one-letter code: Toxin TdNa5 (83 aa).

An N-terminal signal peptide occupies residues 1-20 (MKTIIFFIACLMLIDVVVES). The region spanning 21–82 (KDGYIIEHRG…IFDSNNNKCG (62 aa)) is the LCN-type CS-alpha/beta domain. 4 cysteine pairs are disulfide-bonded: Cys-31–Cys-81, Cys-35–Cys-57, Cys-43–Cys-62, and Cys-47–Cys-64. Cysteine amide is present on Cys-81.

It belongs to the long (4 C-C) scorpion toxin superfamily. Sodium channel inhibitor family. Beta subfamily. As to expression, expressed by the venom gland.

The protein localises to the secreted. Inhibits the sodium currents (Nav) in an apparent irreversible manner. Produces small depolarization and induces repetitive firing in squid axons. Is specific for arthropods (crickets, triatomides, crabs and squids), but is non-toxic to mice. Shows antibacterial activity against both Gram-positive and Gram-negative bacteria. This Tityus discrepans (Venezuelan scorpion) protein is Toxin TdNa5.